The primary structure comprises 301 residues: Indole-3-glycerol phosphate synthase (301 aa).

It belongs to the TrpC family.

It carries out the reaction 1-(2-carboxyphenylamino)-1-deoxy-D-ribulose 5-phosphate + H(+) = (1S,2R)-1-C-(indol-3-yl)glycerol 3-phosphate + CO2 + H2O. It functions in the pathway amino-acid biosynthesis; L-tryptophan biosynthesis; L-tryptophan from chorismate: step 4/5. The sequence is that of Indole-3-glycerol phosphate synthase from Prochlorococcus marinus (strain MIT 9313).